A 765-amino-acid chain; its full sequence is Protein PAT1 homolog 1 (765 aa).

Disordered stretches follow at residues 1 to 98, 119 to 147, and 210 to 244; these read MFRF…DERG, GVGS…LAGP, and LPNR…SPPV. Positions 7–30 are enriched in acidic residues; sequence LDDDCTLEEEEGLVEEEDEIDQFN. The segment covering 45-59 has biased composition (basic and acidic residues); that stretch reads EEHTRLAELDERVRD. Basic and acidic residues predominate over residues 218–227; the sequence is SRDEGRDLSE. Phosphoserine occurs at positions 235 and 236. Residues 235–244 are compositionally biased toward low complexity; the sequence is SSPVIGSPPV.

It belongs to the PAT1 family. In terms of assembly, interacts with ribonucleoprotein complex components.

The protein localises to the cytoplasm. The protein resides in the P-body. Its subcellular location is the nucleus. It is found in the PML body. It localises to the nucleus speckle. In terms of biological role, RNA-binding protein involved in deadenylation-dependent decapping of mRNAs, leading to the degradation of mRNAs. Acts as a scaffold protein that connects deadenylation and decapping machinery. Required for cytoplasmic mRNA processing body (P-body) assembly. The polypeptide is Protein PAT1 homolog 1 (patl1) (Danio rerio (Zebrafish)).